A 122-amino-acid chain; its full sequence is Ig heavy chain V region M511 (122 aa).

The Ig-like domain occupies 1-114 (EVKLVESGGG…SYWYFDVWGA (114 aa)).

This Mus musculus (Mouse) protein is Ig heavy chain V region M511.